Consider the following 314-residue polypeptide: Altered inheritance of mitochondria protein 6 homolog ARB_06966 (314 aa).

A signal peptide spans 1–21 (MKSSILASAAILAASLEPVAA). Residues Asn-91 and Asn-184 are each glycosylated (N-linked (GlcNAc...) asparagine).

This sequence belongs to the AIM6 family.

Its subcellular location is the secreted. The sequence is that of Altered inheritance of mitochondria protein 6 homolog ARB_06966 from Arthroderma benhamiae (strain ATCC MYA-4681 / CBS 112371) (Trichophyton mentagrophytes).